Reading from the N-terminus, the 208-residue chain is Small ribosomal subunit protein uS5 (208 aa).

The disordered stretch occupies residues 1 to 38; the sequence is MPGRERRDGGRSADDNQKKNDRRGGRRDDRRNQQQDER. The S5 DRBM domain maps to 41–104; sequence YIERVVTINR…EEARKNFFRV (64 aa).

This sequence belongs to the universal ribosomal protein uS5 family. As to quaternary structure, part of the 30S ribosomal subunit. Contacts proteins S4 and S8.

In terms of biological role, with S4 and S12 plays an important role in translational accuracy. Functionally, located at the back of the 30S subunit body where it stabilizes the conformation of the head with respect to the body. This is Small ribosomal subunit protein uS5 from Corynebacterium diphtheriae (strain ATCC 700971 / NCTC 13129 / Biotype gravis).